Reading from the N-terminus, the 453-residue chain is Tubulin alpha-2 chain (453 aa).

Position 11 (glutamine 11) interacts with GTP. Residue lysine 40 is modified to N6-acetyllysine. Positions 71, 144, 145, 179, 206, and 228 each coordinate GTP. Glutamate 71 contributes to the Mg(2+) binding site. Glutamate 254 is an active-site residue. The segment at 432 to 453 (YEEVGAETAEGEGEEEDFGEEY) is disordered.

Belongs to the tubulin family. In terms of assembly, dimer of alpha and beta chains. A typical microtubule is a hollow water-filled tube with an outer diameter of 25 nm and an inner diameter of 15 nM. Alpha-beta heterodimers associate head-to-tail to form protofilaments running lengthwise along the microtubule wall with the beta-tubulin subunit facing the microtubule plus end conferring a structural polarity. Microtubules usually have 13 protofilaments but different protofilament numbers can be found in some organisms and specialized cells. It depends on Mg(2+) as a cofactor. Undergoes a tyrosination/detyrosination cycle, the cyclic removal and re-addition of a C-terminal tyrosine residue by the enzymes tubulin tyrosine carboxypeptidase (TTCP) and tubulin tyrosine ligase (TTL), respectively. Post-translationally, acetylation of alpha chains at Lys-40 stabilizes microtubules and affects affinity and processivity of microtubule motors. This modification has a role in multiple cellular functions, ranging from cell motility, cell cycle progression or cell differentiation to intracellular trafficking and signaling.

It is found in the cytoplasm. The protein localises to the cytoskeleton. The catalysed reaction is GTP + H2O = GDP + phosphate + H(+). Its function is as follows. Tubulin is the major constituent of microtubules, a cylinder consisting of laterally associated linear protofilaments composed of alpha- and beta-tubulin heterodimers. Microtubules grow by the addition of GTP-tubulin dimers to the microtubule end, where a stabilizing cap forms. Below the cap, tubulin dimers are in GDP-bound state, owing to GTPase activity of alpha-tubulin. This chain is Tubulin alpha-2 chain (TUBA2), found in Pelvetia fastigiata (Brown alga).